Consider the following 162-residue polypeptide: UPF0114 protein VCM66_0196 (162 aa).

Transmembrane regions (helical) follow at residues 15 to 35 (IMAP…IKFF), 53 to 73 (LILV…IVMV), 109 to 126 (VSAS…KVFM), and 136 to 156 (IKWY…MGYL).

Belongs to the UPF0114 family.

Its subcellular location is the cell membrane. The polypeptide is UPF0114 protein VCM66_0196 (Vibrio cholerae serotype O1 (strain M66-2)).